The following is a 1102-amino-acid chain: ATP-dependent DNA helicase MPH1 (1102 aa).

Positions 19–55 are disordered; it reads ALDKPATSGLHSREQEQQRDISNATPHTSTDLELEDF. Residues 38–49 are compositionally biased toward polar residues; that stretch reads DISNATPHTSTD. The Helicase ATP-binding domain maps to 147 to 315; it reads IVKNGLFNNT…DVIDNLGVSH (169 aa). 160-167 is a binding site for ATP; it reads LPTGLGKT. A DEAH box motif is present at residues 263–266; it reads DEAH. The 162-residue stretch at 490–651 folds into the Helicase C-terminal domain; sequence NLLNYFMDAG…GSRFNFRHDL (162 aa). Disordered regions lie at residues 672–702, 720–743, 818–837, and 858–1102; these read PIEN…FNMP, ASKT…DEIS, SQGI…KSRY, and SGRK…SESG. The span at 687–699 shows a compositional bias: basic residues; it reads RSTRGKKASKKKF. Basic and acidic residues predominate over residues 822–837; sequence ETRHTKPHGDTDKSRY. Residues 1003-1019 show a composition bias toward low complexity; it reads SSGAASKSGSTASTAAK. The span at 1069 to 1082 shows a compositional bias: acidic residues; it reads SDDDDDDNDDEDDV.

The protein belongs to the DEAD box helicase family. DEAH subfamily. FANCM sub-subfamily. As to quaternary structure, interacts with the MHF histone-fold complex to form the FANCM-MHF complex.

Its subcellular location is the nucleus. It carries out the reaction ATP + H2O = ADP + phosphate + H(+). In terms of biological role, ATP-dependent DNA helicase involved in DNA damage repair by homologous recombination and in genome maintenance. Capable of unwinding D-loops. Plays a role in limiting crossover recombinants during mitotic DNA double-strand break (DSB) repair. Component of a FANCM-MHF complex which promotes gene conversion at blocked replication forks, probably by reversal of the stalled fork. The polypeptide is ATP-dependent DNA helicase MPH1 (Pyricularia oryzae (strain 70-15 / ATCC MYA-4617 / FGSC 8958) (Rice blast fungus)).